The chain runs to 927 residues: BTB/POZ domain-containing protein KCTD19 (927 aa).

The BTB 1 domain occupies 18–72; that stretch reads NVGGWHFSVPRSKLAQFPDSLLWKEASALTSSENQRLFIDRDGSTFRHVHYYLYT. Residue Ser-270 is modified to Phosphoserine. In terms of domain architecture, BTB 2 spans 399 to 486; it reads IKLYVGSHWY…YHIPALSEAL (88 aa). The interval 664 to 760 is disordered; the sequence is VEEASLHVPS…NANGTDNPGA (97 aa). Residues 731-743 show a composition bias toward basic and acidic residues; that stretch reads DWGKQRPKDRESP.

As to quaternary structure, identified in a complex with ZNF541, HDAC1 and HSPA2. Identified in a complex with ZNF541 and HDAC1. Identified in a complex with HDAC1, HDAC2, DNTTIP1 and ZNF541. Detected in adult testis.

Its subcellular location is the nucleus. In terms of biological role, transcription regulator which is essential for male fertility and for the completion of meiotic prophase in spermatocytes. Regulates progression of the pachytene stage of meiotic prophase and promotes the transcriptional activation activity ZNF541. Required for the organization of chromosomes during metaphase I. The polypeptide is BTB/POZ domain-containing protein KCTD19 (Kctd19) (Mus musculus (Mouse)).